Reading from the N-terminus, the 386-residue chain is Homoserine O-succinyltransferase (386 aa).

The AB hydrolase-1 domain occupies N49–L358. S156 (nucleophile) is an active-site residue. R226 lines the substrate pocket. Residues D321 and H354 contribute to the active site. D355 contributes to the substrate binding site.

Belongs to the AB hydrolase superfamily. MetX family. Homodimer.

It localises to the cytoplasm. It carries out the reaction L-homoserine + succinyl-CoA = O-succinyl-L-homoserine + CoA. Its pathway is amino-acid biosynthesis; L-methionine biosynthesis via de novo pathway; O-succinyl-L-homoserine from L-homoserine: step 1/1. Transfers a succinyl group from succinyl-CoA to L-homoserine, forming succinyl-L-homoserine. The polypeptide is Homoserine O-succinyltransferase (Acinetobacter baumannii (strain AB307-0294)).